The following is a 155-amino-acid chain: Ribosomal RNA large subunit methyltransferase H (155 aa).

Residues Leu-72, Gly-103, and 122–127 each bind S-adenosyl-L-methionine; that span reads LSPLTL.

The protein belongs to the RNA methyltransferase RlmH family. In terms of assembly, homodimer.

The protein localises to the cytoplasm. It carries out the reaction pseudouridine(1915) in 23S rRNA + S-adenosyl-L-methionine = N(3)-methylpseudouridine(1915) in 23S rRNA + S-adenosyl-L-homocysteine + H(+). Specifically methylates the pseudouridine at position 1915 (m3Psi1915) in 23S rRNA. The chain is Ribosomal RNA large subunit methyltransferase H from Histophilus somni (strain 129Pt) (Haemophilus somnus).